We begin with the raw amino-acid sequence, 347 residues long: Quinolinate synthase (347 aa).

Residues H47 and S68 each coordinate iminosuccinate. Residue C113 participates in [4Fe-4S] cluster binding. Residues 139–141 (YAN) and S156 each bind iminosuccinate. C200 contributes to the [4Fe-4S] cluster binding site. Residues 226-228 (HPE) and T243 contribute to the iminosuccinate site. Residue C297 participates in [4Fe-4S] cluster binding.

It belongs to the quinolinate synthase family. Type 1 subfamily. [4Fe-4S] cluster is required as a cofactor.

The protein resides in the cytoplasm. The enzyme catalyses iminosuccinate + dihydroxyacetone phosphate = quinolinate + phosphate + 2 H2O + H(+). The protein operates within cofactor biosynthesis; NAD(+) biosynthesis; quinolinate from iminoaspartate: step 1/1. Functionally, catalyzes the condensation of iminoaspartate with dihydroxyacetone phosphate to form quinolinate. The chain is Quinolinate synthase from Salmonella paratyphi A (strain ATCC 9150 / SARB42).